The primary structure comprises 58 residues: Large ribosomal subunit protein uL30 (58 aa).

Belongs to the universal ribosomal protein uL30 family. In terms of assembly, part of the 50S ribosomal subunit.

This Cytophaga hutchinsonii (strain ATCC 33406 / DSM 1761 / CIP 103989 / NBRC 15051 / NCIMB 9469 / D465) protein is Large ribosomal subunit protein uL30.